The sequence spans 199 residues: dITP/XTP pyrophosphatase (199 aa).

Thr-8 to Lys-13 is a substrate binding site. Glu-40 and Asp-68 together coordinate Mg(2+). The active-site Proton acceptor is the Asp-68. Residues Ser-69, Phe-154–Asp-157, Lys-177, and His-182–Arg-183 contribute to the substrate site.

This sequence belongs to the HAM1 NTPase family. In terms of assembly, homodimer. Mg(2+) serves as cofactor.

The enzyme catalyses XTP + H2O = XMP + diphosphate + H(+). It catalyses the reaction dITP + H2O = dIMP + diphosphate + H(+). The catalysed reaction is ITP + H2O = IMP + diphosphate + H(+). Its function is as follows. Pyrophosphatase that catalyzes the hydrolysis of nucleoside triphosphates to their monophosphate derivatives, with a high preference for the non-canonical purine nucleotides XTP (xanthosine triphosphate), dITP (deoxyinosine triphosphate) and ITP. Seems to function as a house-cleaning enzyme that removes non-canonical purine nucleotides from the nucleotide pool, thus preventing their incorporation into DNA/RNA and avoiding chromosomal lesions. This chain is dITP/XTP pyrophosphatase, found in Wigglesworthia glossinidia brevipalpis.